We begin with the raw amino-acid sequence, 577 residues long: Moesin (577 aa).

Residues 2–295 form the FERM domain; the sequence is PKTISVRVTT…GNHELYMRRR (294 aa). Residue S74 is modified to Phosphoserine. Residue K79 is modified to N6-acetyllysine. An N6-succinyllysine modification is found at K83. Residues 115–120 carry the [IL]-x-C-x-x-[DE] motif motif; that stretch reads IYCPPE. Y116 carries the phosphotyrosine modification. Residue C117 is modified to S-nitrosocysteine. N6-acetyllysine occurs at positions 139 and 165. Disordered stretches follow at residues 322–342, 358–419, and 468–518; these read LLEN…KIER, TKKA…QLAS, and STPH…NERV. Positions 358 to 401 are enriched in basic and acidic residues; that stretch reads TKKAQQELEEQTRRALELEQERKRAQSEAEKLAKERQEAEEAKE. Position 407 is a phosphoserine (S407). The span at 492-518 shows a compositional bias: basic and acidic residues; the sequence is AELRADAMAKDRSEEERTTEAEKNERV. At S527 the chain carries Phosphoserine. T558 bears the Phosphothreonine; by ROCK2 and STK10 mark.

As to quaternary structure, in resting T-cells, part of a PAG1-NHERF1-MSN complex which is disrupted upon TCR activation. Interacts with NHERF1. Interacts with PPP1R16B. Interacts with SELPLG and SYK; these interactions mediate the activation of SYK by SELPLG. Interacts with PDPN (via cytoplasmic domain); this interaction activates RHOA and promotes epithelial-mesenchymal transition. Interacts with SPN/CD43 cytoplasmic tail. Interacts with CD44. Interacts with ICAM2. Interacts with ICAM3 (via C-terminus). Interacts with PDZD8. Interacts with F-actin. Interacts with CD46. Interacts with PTPN6. Post-translationally, phosphorylation on Thr-558 by STK10 negatively regulates lymphocyte migration and polarization. Phosphorylation on Thr-558 is crucial for the formation of microvilli-like structures. Phosphorylation by ROCK2 suppresses the head-to-tail association of the N-terminal and C-terminal halves resulting in an opened conformation which is capable of actin and membrane-binding. In terms of processing, S-nitrosylation of Cys-117 is induced by interferon-gamma and oxidatively-modified low-densitity lipoprotein (LDL(ox)) implicating the iNOS-S100A8/9 transnitrosylase complex.

Its subcellular location is the cell membrane. It is found in the cytoplasm. The protein resides in the cytoskeleton. It localises to the apical cell membrane. The protein localises to the cell projection. Its subcellular location is the microvillus membrane. It is found in the microvillus. In terms of biological role, ezrin-radixin-moesin (ERM) family protein that connects the actin cytoskeleton to the plasma membrane and thereby regulates the structure and function of specific domains of the cell cortex. Tethers actin filaments by oscillating between a resting and an activated state providing transient interactions between moesin and the actin cytoskeleton. Once phosphorylated on its C-terminal threonine, moesin is activated leading to interaction with F-actin and cytoskeletal rearrangement. These rearrangements regulate many cellular processes, including cell shape determination, membrane transport, and signal transduction. The role of moesin is particularly important in immunity acting on both T and B-cells homeostasis and self-tolerance, regulating lymphocyte egress from lymphoid organs. Modulates phagolysosomal biogenesis in macrophages. Also participates in immunologic synapse formation. The sequence is that of Moesin from Mus musculus (Mouse).